The primary structure comprises 104 residues: Large ribosomal subunit protein uL24 (104 aa).

Belongs to the universal ribosomal protein uL24 family. In terms of assembly, part of the 50S ribosomal subunit.

Functionally, one of two assembly initiator proteins, it binds directly to the 5'-end of the 23S rRNA, where it nucleates assembly of the 50S subunit. Its function is as follows. One of the proteins that surrounds the polypeptide exit tunnel on the outside of the subunit. The chain is Large ribosomal subunit protein uL24 from Rhodopseudomonas palustris (strain BisB5).